The following is a 964-amino-acid chain: Translation initiation factor IF-2 (964 aa).

Over residues 1–10 (MSDKTNDDKT) the composition is skewed to basic and acidic residues. The interval 1-379 (MSDKTNDDKT…SQMQETREKI (379 aa)) is disordered. Polar residues predominate over residues 27–37 (EQSTVRQNFSH). A compositionally biased stretch (low complexity) spans 77 to 102 (APAASTPAPAQAAQPAQAAPVVRAPA). The segment covering 103-113 (PATPAPKPAAP) has biased composition (pro residues). A compositionally biased stretch (low complexity) spans 114-140 (AAPVTKPHVAQQRPAQQRPGGQQAQRP). Composition is skewed to basic and acidic residues over residues 156-227 (SEMD…EAAK) and 234-243 (ARTERRDDAR). Over residues 250 to 278 (RPQQAGRPQGNRPPQGGRPQQGGPRPAAP) the composition is skewed to low complexity. The segment covering 323–338 (PEVRAPKVVKTEDDRR) has biased composition (basic and acidic residues). A tr-type G domain is found at 462–629 (SRPPVVTIMG…AILLQAEILD (168 aa)). The tract at residues 471 to 478 (GHVDHGKT) is G1. 471 to 478 (GHVDHGKT) is a GTP binding site. The G2 stretch occupies residues 496–500 (GITQH). The interval 517–520 (DTPG) is G3. Residues 517–521 (DTPGH) and 571–574 (NKID) each bind GTP. Residues 571-574 (NKID) are G4. Residues 607–609 (SAK) form a G5 region.

The protein belongs to the TRAFAC class translation factor GTPase superfamily. Classic translation factor GTPase family. IF-2 subfamily.

The protein resides in the cytoplasm. In terms of biological role, one of the essential components for the initiation of protein synthesis. Protects formylmethionyl-tRNA from spontaneous hydrolysis and promotes its binding to the 30S ribosomal subunits. Also involved in the hydrolysis of GTP during the formation of the 70S ribosomal complex. This Brucella anthropi (strain ATCC 49188 / DSM 6882 / CCUG 24695 / JCM 21032 / LMG 3331 / NBRC 15819 / NCTC 12168 / Alc 37) (Ochrobactrum anthropi) protein is Translation initiation factor IF-2.